The sequence spans 65 residues: Putative primary metabolism protein prl65 (65 aa).

The interval 1 to 25 (MTKYSKGNKVEYHPIGGPSGTSTST) is disordered.

May play a role in primary metabolism. This Schizosaccharomyces pombe (strain 972 / ATCC 24843) (Fission yeast) protein is Putative primary metabolism protein prl65.